The following is a 153-amino-acid chain: Glucose-6-phosphate 1-dehydrogenase (153 aa).

Arg-21 and Lys-120 together coordinate NADP(+). Lys-120 is a binding site for D-glucose 6-phosphate.

It belongs to the glucose-6-phosphate dehydrogenase family.

It is found in the cytoplasm. Its subcellular location is the cytosol. The enzyme catalyses D-glucose 6-phosphate + NADP(+) = 6-phospho-D-glucono-1,5-lactone + NADPH + H(+). The protein operates within carbohydrate degradation; pentose phosphate pathway; D-ribulose 5-phosphate from D-glucose 6-phosphate (oxidative stage): step 1/3. In terms of biological role, cytosolic glucose-6-phosphate dehydrogenase that catalyzes the first and rate-limiting step of the oxidative branch within the pentose phosphate pathway/shunt, an alternative route to glycolysis for the dissimilation of carbohydrates and a major source of reducing power and metabolic intermediates for fatty acid and nucleic acid biosynthetic processes. The chain is Glucose-6-phosphate 1-dehydrogenase (ZW) from Culex pipiens (House mosquito).